The following is a 544-amino-acid chain: NADH-quinone oxidoreductase subunit C/D (544 aa).

The NADH dehydrogenase I subunit C stretch occupies residues 1 to 138; sequence MLNCDMLIDS…KGQICTETED (138 aa). The interval 161 to 544 is NADH dehydrogenase I subunit D; that stretch reads MLLNVGPSHP…MNFIAGEFDR (384 aa).

It in the N-terminal section; belongs to the complex I 30 kDa subunit family. In the C-terminal section; belongs to the complex I 49 kDa subunit family. As to quaternary structure, NDH-1 is composed of 13 different subunits. Subunits NuoB, CD, E, F, and G constitute the peripheral sector of the complex.

It is found in the cell inner membrane. It catalyses the reaction a quinone + NADH + 5 H(+)(in) = a quinol + NAD(+) + 4 H(+)(out). NDH-1 shuttles electrons from NADH, via FMN and iron-sulfur (Fe-S) centers, to quinones in the respiratory chain. The immediate electron acceptor for the enzyme in this species is believed to be ubiquinone. Couples the redox reaction to proton translocation (for every two electrons transferred, four hydrogen ions are translocated across the cytoplasmic membrane), and thus conserves the redox energy in a proton gradient. This Aliarcobacter butzleri (strain RM4018) (Arcobacter butzleri) protein is NADH-quinone oxidoreductase subunit C/D.